A 380-amino-acid polypeptide reads, in one-letter code: Adaptive-response sensory kinase SasA (380 aa).

The tract at residues 20-101 is kaiB-like domain, interacts with KaiC; the sequence is LLFVANRPGD…QKVDYWWPRW (82 aa). Residues 157 to 380 form the Histidine kinase domain; it reads LLAHELRNPL…CFHFTLPVYS (224 aa). Residue His160 is modified to Phosphohistidine; by autocatalysis.

As to quaternary structure, homotrimer with a small amount of possible homohexamer; a protein fragment of 109-380 is also a homotrimer. Interacts with KaiC, probably as 1 SasA trimer:1 KaiC homohexamer; unphosphorylated SasA has the highest affinity. Homodimer. Binds to the B-loop in the CI domain of KaiC; SasA and KaiB(fs) compete to bind to the CI domain. Binds preferentially to doubly phosphorylated KaiC. Autophosphorylates, probably on His-160.

It catalyses the reaction ATP + protein L-histidine = ADP + protein N-phospho-L-histidine.. Its function is as follows. Member of the two-component regulatory system SasA/RpaA involved in genome-wide circadian gene expression. One of several clock output pathways. Participates in the Kai clock protein complex, the main circadian regulator in cyanobacteria, via its interaction with KaiC. KaiC enhances the autophosphorylation activity of SasA, which then transfers its phosphate group to RpaA to activate it. In addition to its output function, recruits fold-shifted KaiB (KaiB(fs)) to KaiC to cooperatively form the KaiB(6):KaiC(6) complex (independent of SasA kinase activity). Required for robustness of the circadian rhythm of gene expression and is involved in clock output, also required for adaptation to light/dark cycles. In Thermosynechococcus vestitus (strain NIES-2133 / IAM M-273 / BP-1), this protein is Adaptive-response sensory kinase SasA.